The primary structure comprises 311 residues: Probable lipid kinase YegS-like (311 aa).

Residues 9–140 form the DAGKc domain; sequence EHDGDTWLIL…VDVGTLGDDY (132 aa). Residues Thr-47, 73–79, and Ser-102 each bind ATP; that span reads GDGTVNE. Mg(2+)-binding residues include Lys-221, Asp-224, and Leu-226. Residue Glu-281 is the Proton acceptor of the active site.

The protein belongs to the diacylglycerol/lipid kinase family. YegS lipid kinase subfamily. It depends on Mg(2+) as a cofactor. Requires Ca(2+) as cofactor.

The protein resides in the cytoplasm. Probably phosphorylates lipids; the in vivo substrate is unknown. This is Probable lipid kinase YegS-like from Chromohalobacter salexigens (strain ATCC BAA-138 / DSM 3043 / CIP 106854 / NCIMB 13768 / 1H11).